A 150-amino-acid chain; its full sequence is Cell division protein SepF (150 aa).

The protein belongs to the SepF family. In terms of assembly, homodimer. Interacts with FtsZ.

The protein localises to the cytoplasm. Functionally, cell division protein that is part of the divisome complex and is recruited early to the Z-ring. Probably stimulates Z-ring formation, perhaps through the cross-linking of FtsZ protofilaments. Its function overlaps with FtsA. This Clostridium botulinum (strain Kyoto / Type A2) protein is Cell division protein SepF.